We begin with the raw amino-acid sequence, 64 residues long: Cecropin-A (64 aa).

The signal sequence occupies residues 1 to 22 (MNFSRIFFFVFACLTALAMVNA). Residues 23-26 (APEP) constitute a propeptide, removed by a dipeptidylpeptidase. Residue lysine 63 is modified to Lysine amide.

The protein belongs to the cecropin family. A protein with the same sequence as cecropin A, but lacking the carboxyl blocking group, has been isolated and called cecropin C.

The protein localises to the secreted. Cecropins have lytic and antibacterial activity against several Gram-positive and Gram-negative bacteria. In Hyalophora cecropia (Cecropia moth), this protein is Cecropin-A.